A 31-amino-acid polypeptide reads, in one-letter code: Nemertide alpha-6 (31 aa).

Disulfide bonds link Cys-2-Cys-16, Cys-9-Cys-20, and Cys-15-Cys-26. 4-hydroxyproline is present on residues Pro-28 and Pro-29.

This sequence belongs to the nemertide family. Confined to the epidermis and to the mucus layer.

Its subcellular location is the secreted. Highly potent toxin against both insect and some mammalian sodium channels (Nav). It potently inhibits inactivation of insect sodium channels of B.germanica (BgNav1) (EC(50)=2.6 nM) and also delays the inactivation of mammalian Nav with potent activity on Nav1.1/SCN1A (hNav1.1/SCN1A; EC(50)=7.9 nM, rNav1.2/SCN2A; EC(50)=24.3 nM, rNav1.3/SCN3A; EC(50)=105.6 nM, rNav1.4/SCN4A; EC(50)=46.4 nM, hNav1.5/SCN5A; EC(50)=215.2 nM, mNav1.6/SCN8A; EC(50)=36.3 nM, hNav1.9/SCN9A; EC(50)=97.2 nM). 1 uM is enough to completely inhibits the inactivation, resulting in sustained non-inactivating currents. In addition, the toxin significantly enhances the recovery from inactivation, and the open state is not required for the toxin to interact with the channel. In vivo, injection into brine shrimp (Artemia salina) stops movement or causes death after 24 hours (EC(50)=2.8 uM). In Lineus sanguineus (Ribbon worm), this protein is Nemertide alpha-6.